The following is a 366-amino-acid chain: Alanine racemase (366 aa).

K33 (proton acceptor; specific for D-alanine) is an active-site residue. K33 carries the post-translational modification N6-(pyridoxal phosphate)lysine. R129 serves as a coordination point for substrate. The Proton acceptor; specific for L-alanine role is filled by Y253. M301 provides a ligand contact to substrate.

The protein belongs to the alanine racemase family. Requires pyridoxal 5'-phosphate as cofactor.

It catalyses the reaction L-alanine = D-alanine. Its pathway is amino-acid biosynthesis; D-alanine biosynthesis; D-alanine from L-alanine: step 1/1. Functionally, catalyzes the interconversion of L-alanine and D-alanine. May also act on other amino acids. This Xanthomonas axonopodis pv. citri (strain 306) protein is Alanine racemase (alr).